We begin with the raw amino-acid sequence, 1291 residues long: Histone-lysine N-methyltransferase SETDB1 (1291 aa).

Positions 18-64 (ESEEIAELQQAVVEELGISMEELRHFIDEELEKMDCVQQRKKQLAEL) form a coiled coil. Residues 108–147 (RDSSSEDESSRPTEIIEIPDEDDDVLSIDSGDAGSRTPKD) are disordered. 2 positions are modified to phosphoserine: S112 and S117. The residue at position 120 (T120) is a Phosphothreonine. Acidic residues predominate over residues 124 to 133 (EIPDEDDDVL). A Glycyl lysine isopeptide (Lys-Gly) (interchain with G-Cter in SUMO2); alternate cross-link involves residue K182. Residue K182 forms a Glycyl lysine isopeptide (Lys-Gly) (interchain with G-Cter in ubiquitin); alternate linkage. 2 consecutive Tudor domains span residues 257 to 320 (KLYV…LKKT) and 347 to 403 (LLKS…SMKT). The tract at residues 404-545 (SSASALEKKQ…APAPSALPAP (142 aa)) is disordered. Residues 433 to 444 (QYTQDLTGTGTQ) are compositionally biased toward polar residues. Over residues 448-468 (VEPPQPTAPPAPPFPPAPPLS) the composition is skewed to pro residues. Positions 477–515 (ESQLAQSRKQVAKKSTSFRPGSVGSGHSSPTSPALSENV) are enriched in polar residues. Residues 528–539 (SPLGSTASAPAP) show a composition bias toward low complexity. An MBD domain is found at 594 to 665 (YRGKNPLLVP…EMFCLDPYVL (72 aa)). The 74-residue stretch at 727-800 (VGCDCKDGCR…MCTNRLVQHG (74 aa)) folds into the Pre-SET domain. Positions 729, 731, 735, 741, 743, 781, 785, 787, and 792 each coordinate Zn(2+). The SET domain occupies 803 to 1266 (VRLQLFKTQN…AGTELTWDYN (464 aa)). Residues 813–815 (KGW), D851, and Y853 each bind S-adenosyl-L-methionine. A Glycyl lysine isopeptide (Lys-Gly) (interchain with G-Cter in ubiquitin) cross-link involves residue K867. The interval 868–1160 (EGYESDAPCS…MTGPMKRQVA (293 aa)) is disordered. Residues 896-907 (EDPEESNDDSSD) are compositionally biased toward acidic residues. Over residues 951–963 (DLGPPHIPVPPSI) the composition is skewed to pro residues. S1025 bears the Phosphoserine mark. Residues 1031 to 1050 (IKDEGDIKQAKKEDTDDRNK) are compositionally biased toward basic and acidic residues. Residue K1032 forms a Glycyl lysine isopeptide (Lys-Gly) (interchain with G-Cter in SUMO2); alternate linkage. A Glycyl lysine isopeptide (Lys-Gly) (interchain with G-Cter in SUMO1); alternate cross-link involves residue K1032. Residue K1038 forms a Glycyl lysine isopeptide (Lys-Gly) (interchain with G-Cter in SUMO2) linkage. The span at 1052–1063 (SVVTESSRNYGY) shows a compositional bias: polar residues. S1066 is modified (phosphoserine). Residue K1069 forms a Glycyl lysine isopeptide (Lys-Gly) (interchain with G-Cter in SUMO2) linkage. Residues 1100 to 1115 (LTLSSSTESEGESGTS) are compositionally biased toward low complexity. Positions 1116-1140 (RKPTAGQTSATAVDSDDIQTISSGS) are enriched in polar residues. K1149 participates in a covalent cross-link: Glycyl lysine isopeptide (Lys-Gly) (interchain with G-Cter in SUMO2). N6,N6,N6-trimethyllysine; alternate occurs at positions 1170 and 1178. Residues K1170 and K1178 each carry the N6,N6-dimethyllysine; alternate modification. Residues R1220 and 1223–1224 (NH) contribute to the S-adenosyl-L-methionine site. Zn(2+)-binding residues include C1226, C1279, C1281, and C1286. Positions 1275 to 1291 (KELLCCCGAIECRGRLL) constitute a Post-SET domain.

Belongs to the class V-like SAM-binding methyltransferase superfamily. Histone-lysine methyltransferase family. Suvar3-9 subfamily. In terms of assembly, part of a complex containing at least CDYL, REST, WIZ, SETDB1, EHMT1 and EHMT2. Forms a complex with ATRX, TRIM28 and ZNF274. Probably part of a corepressor complex containing ZNF304, TRIM28, SETDB1 and DNMT1. Interacts with TRIM28/TIF1B. Interacts with ATF7IP and ATF7IP2; the interaction with ATF7IP protects SETDB1 from proteasomal degradation and is required to stimulate histone methyltransferase activity and facilitate the conversion of dimethylated to trimethylated H3 'Lys-9'. Interacts with CBX1 and CBX5. Interacts with DNMT3A and DNMT3B. Interacts with SUMO2. Interacts with MPHOSPH8. Interacts with ERG. Interacts with HDAC1, HDAC2, SIN3A and SIN3B. Interacts with ATRX. Interacts with RESF1. Interacts with ZNF638. Interacts with TASOR. Interacts with ZNF263; recruited to the SIX3 promoter along with other proteins involved in chromatin modification and transcriptional corepression where it contributes to transcriptional repression. Interacts with PHF13; the interaction probably enhances SETDB1 chromatin-associated levels and activity. Interacts with VRK1. Degraded by the proteasome, shielded by interaction with ATF7IP. In terms of processing, monoubiquitinated at Lys-867 by E2 enzymes of the UBE2E family. The conjugated-Ub is protected from deubiquitination by the SET domain. Monoubiquitination at Lys-867 is required for catalytic activity, H3K9 methylation and endogenous retrovirus silencing. Widely expressed. High expression in testis.

Its subcellular location is the nucleus. It localises to the cytoplasm. The protein localises to the chromosome. It carries out the reaction N(6),N(6)-dimethyl-L-lysyl(9)-[histone H3] + S-adenosyl-L-methionine = N(6),N(6),N(6)-trimethyl-L-lysyl(9)-[histone H3] + S-adenosyl-L-homocysteine + H(+). In terms of biological role, histone methyltransferase that specifically trimethylates 'Lys-9' of histone H3. H3 'Lys-9' trimethylation represents a specific tag for epigenetic transcriptional repression by recruiting HP1 (CBX1, CBX3 and/or CBX5) proteins to methylated histones. Mainly functions in euchromatin regions, thereby playing a central role in the silencing of euchromatic genes. H3 'Lys-9' trimethylation is coordinated with DNA methylation. Required for HUSH-mediated heterochromatin formation and gene silencing. Forms a complex with MBD1 and ATF7IP that represses transcription and couples DNA methylation and histone 'Lys-9' trimethylation. Its activity is dependent on MBD1 and is heritably maintained through DNA replication by being recruited by CAF-1. SETDB1 is targeted to histone H3 by TRIM28/TIF1B, a factor recruited by KRAB zinc-finger proteins. Probably forms a corepressor complex required for activated KRAS-mediated promoter hypermethylation and transcriptional silencing of tumor suppressor genes (TSGs) or other tumor-related genes in colorectal cancer (CRC) cells. Required to maintain a transcriptionally repressive state of genes in undifferentiated embryonic stem cells (ESCs). In ESCs, in collaboration with TRIM28, is also required for H3K9me3 and silencing of endogenous and introduced retroviruses in a DNA-methylation independent-pathway. Associates at promoter regions of tumor suppressor genes (TSGs) leading to their gene silencing. The SETDB1-TRIM28-ZNF274 complex may play a role in recruiting ATRX to the 3'-exons of zinc-finger coding genes with atypical chromatin signatures to establish or maintain/protect H3K9me3 at these transcriptionally active regions. In Homo sapiens (Human), this protein is Histone-lysine N-methyltransferase SETDB1.